The chain runs to 790 residues: B3 domain-containing transcription repressor VAL1 (790 aa).

Positions 234–260 (KPSRPAISTPPVASKSAQARIGRPPVE) are disordered. The segment at residues 295–396 (FEKTLSASDA…KLIMGSRKAA (102 aa)) is a DNA-binding region (TF-B3). 2 disordered regions span residues 400-429 (DMQGCGLTNGTSTEDTSSSGVTENPPSING) and 446-468 (NLNSETNGGRIGDDPTRVKEKKR). Polar residues predominate over residues 405–429 (GLTNGTSTEDTSSSGVTENPPSING). The CW-type zinc finger occupies 538 to 588 (SGEQERWATCDDCSKWRRLPVDALLSFKWTCIDNVWDVSRCSCSAPEESLK). 4 residues coordinate Zn(2+): Cys547, Cys550, Cys568, and Cys580. Positions 685-732 (LMMRRKKKQLERDVTAAEDKKKKDMELAESDKSKEEKEVNTARIDLNS) form a coiled coil. Residues 689–737 (RKKKQLERDVTAAEDKKKKDMELAESDKSKEEKEVNTARIDLNSDPYNK) are disordered. A compositionally biased stretch (basic and acidic residues) spans 694 to 724 (LERDVTAAEDKKKKDMELAESDKSKEEKEVN).

In terms of assembly, interacts with SNL1. Expressed in flowers and at lower levels in roots, stems and leaves.

It localises to the nucleus. Functionally, transcriptional repressor of gene expression involved in embryonic pathways, such as LEC1, ABI3, and FUS3. Repressor of the sugar-inducible genes involved in the seed maturation program in seedlings. Plays an essential role in regulating the transition from seed maturation to seedling growth. Functionally redundant with VAL2/HSL1. This is B3 domain-containing transcription repressor VAL1 (VAL1) from Arabidopsis thaliana (Mouse-ear cress).